The primary structure comprises 173 residues: Large ribosomal subunit protein uL10 (173 aa).

This sequence belongs to the universal ribosomal protein uL10 family. As to quaternary structure, part of the ribosomal stalk of the 50S ribosomal subunit. The N-terminus interacts with L11 and the large rRNA to form the base of the stalk. The C-terminus forms an elongated spine to which L12 dimers bind in a sequential fashion forming a multimeric L10(L12)X complex.

Forms part of the ribosomal stalk, playing a central role in the interaction of the ribosome with GTP-bound translation factors. The sequence is that of Large ribosomal subunit protein uL10 from Maridesulfovibrio salexigens (strain ATCC 14822 / DSM 2638 / NCIMB 8403 / VKM B-1763) (Desulfovibrio salexigens).